Reading from the N-terminus, the 329-residue chain is tRNA-modifying protein YgfZ (329 aa).

Folate contacts are provided by Trp-27 and Trp-189.

The protein belongs to the tRNA-modifying YgfZ family.

It localises to the cytoplasm. Functionally, folate-binding protein involved in regulating the level of ATP-DnaA and in the modification of some tRNAs. It is probably a key factor in regulatory networks that act via tRNA modification, such as initiation of chromosomal replication. In Cronobacter sakazakii (strain ATCC BAA-894) (Enterobacter sakazakii), this protein is tRNA-modifying protein YgfZ.